Consider the following 267-residue polypeptide: Tryptophan synthase alpha chain (267 aa).

Residues Glu49 and Asp60 each act as proton acceptor in the active site.

The protein belongs to the TrpA family. In terms of assembly, tetramer of two alpha and two beta chains.

It carries out the reaction (1S,2R)-1-C-(indol-3-yl)glycerol 3-phosphate + L-serine = D-glyceraldehyde 3-phosphate + L-tryptophan + H2O. Its pathway is amino-acid biosynthesis; L-tryptophan biosynthesis; L-tryptophan from chorismate: step 5/5. In terms of biological role, the alpha subunit is responsible for the aldol cleavage of indoleglycerol phosphate to indole and glyceraldehyde 3-phosphate. This Pelobacter propionicus (strain DSM 2379 / NBRC 103807 / OttBd1) protein is Tryptophan synthase alpha chain.